We begin with the raw amino-acid sequence, 234 residues long: Elongation factor Tu, chloroplastic (234 aa).

Residues 1–125 form the tr-type G domain; that stretch reads KNMITGAAQM…KVDSYIPTPE (125 aa). 47 to 50 is a GTP binding site; it reads NKQD.

It belongs to the TRAFAC class translation factor GTPase superfamily. Classic translation factor GTPase family. EF-Tu/EF-1A subfamily.

It localises to the plastid. Its subcellular location is the chloroplast. It catalyses the reaction GTP + H2O = GDP + phosphate + H(+). Its function is as follows. GTP hydrolase that promotes the GTP-dependent binding of aminoacyl-tRNA to the A-site of ribosomes during protein biosynthesis. The chain is Elongation factor Tu, chloroplastic (tufA) from Pandorina morum (Freshwater green alga).